The chain runs to 294 residues: 4-hydroxy-tetrahydrodipicolinate synthase (294 aa).

T47 is a binding site for pyruvate. Y135 acts as the Proton donor/acceptor in catalysis. The Schiff-base intermediate with substrate role is filled by K163. I206 is a binding site for pyruvate.

The protein belongs to the DapA family. As to quaternary structure, homodimer.

Its subcellular location is the cytoplasm. The enzyme catalyses L-aspartate 4-semialdehyde + pyruvate = (2S,4S)-4-hydroxy-2,3,4,5-tetrahydrodipicolinate + H2O + H(+). The protein operates within amino-acid biosynthesis; L-lysine biosynthesis via DAP pathway; (S)-tetrahydrodipicolinate from L-aspartate: step 3/4. Functionally, catalyzes the condensation of (S)-aspartate-beta-semialdehyde [(S)-ASA] and pyruvate to 4-hydroxy-tetrahydrodipicolinate (HTPA). The protein is 4-hydroxy-tetrahydrodipicolinate synthase of Staphylococcus epidermidis (strain ATCC 35984 / DSM 28319 / BCRC 17069 / CCUG 31568 / BM 3577 / RP62A).